The primary structure comprises 163 residues: Small ribosomal subunit protein uS9 (163 aa).

Residues 1-25 show a composition bias toward low complexity; sequence MAENTNNSAVTETEETTAAFTTETN. Residues 1–40 form a disordered region; sequence MAENTNNSAVTETEETTAAFTTETNSGAGTGTSTIAPGYG.

The protein belongs to the universal ribosomal protein uS9 family.

The chain is Small ribosomal subunit protein uS9 from Bifidobacterium animalis subsp. lactis (strain AD011).